The primary structure comprises 142 residues: Large ribosomal subunit protein uL13 (142 aa).

The protein belongs to the universal ribosomal protein uL13 family. In terms of assembly, part of the 50S ribosomal subunit.

In terms of biological role, this protein is one of the early assembly proteins of the 50S ribosomal subunit, although it is not seen to bind rRNA by itself. It is important during the early stages of 50S assembly. The sequence is that of Large ribosomal subunit protein uL13 from Xylella fastidiosa (strain 9a5c).